The primary structure comprises 520 residues: Glucose-1-phosphate adenylyltransferase small subunit, chloroplastic (520 aa).

The transit peptide at 1–71 (MATMAAIGSL…RTPSIVSPKA (71 aa)) directs the protein to the chloroplast. A disordered region spans residues 1-81 (MATMAAIGSL…VSDSQNSQTC (81 aa)). The segment covering 14–27 (SSSSNHTRRLSSSS) has biased composition (low complexity). The span at 28–51 (QRKTLSFSSSSLTGEKLNPTQEII) shows a compositional bias: polar residues.

This sequence belongs to the bacterial/plant glucose-1-phosphate adenylyltransferase family. As to quaternary structure, heterotetramer. In terms of tissue distribution, leaves.

The protein localises to the plastid. It localises to the chloroplast. The catalysed reaction is alpha-D-glucose 1-phosphate + ATP + H(+) = ADP-alpha-D-glucose + diphosphate. It functions in the pathway glycan biosynthesis; starch biosynthesis. With respect to regulation, activated by 3'phosphoglycerate, inhibited by orthophosphate. Allosteric regulation. This protein plays a role in synthesis of starch. It catalyzes the synthesis of the activated glycosyl donor, ADP-glucose from Glc-1-P and ATP. The polypeptide is Glucose-1-phosphate adenylyltransferase small subunit, chloroplastic (AGPS1) (Brassica napus (Rape)).